A 158-amino-acid polypeptide reads, in one-letter code: Phosphopantetheine adenylyltransferase (158 aa).

S9 is a binding site for substrate. ATP is bound by residues 9 to 10 (SF) and H17. Positions 41, 73, and 87 each coordinate substrate. Residues 88–90 (GLR), E98, and 122–128 (YSFVSSS) contribute to the ATP site.

Belongs to the bacterial CoaD family. In terms of assembly, homohexamer. Requires Mg(2+) as cofactor.

It localises to the cytoplasm. The enzyme catalyses (R)-4'-phosphopantetheine + ATP + H(+) = 3'-dephospho-CoA + diphosphate. The protein operates within cofactor biosynthesis; coenzyme A biosynthesis; CoA from (R)-pantothenate: step 4/5. Its function is as follows. Reversibly transfers an adenylyl group from ATP to 4'-phosphopantetheine, yielding dephospho-CoA (dPCoA) and pyrophosphate. The sequence is that of Phosphopantetheine adenylyltransferase from Mycolicibacterium smegmatis (strain ATCC 700084 / mc(2)155) (Mycobacterium smegmatis).